We begin with the raw amino-acid sequence, 94 residues long: MICOS complex subunit MIC12 (94 aa).

Residues tyrosine 7–tyrosine 23 traverse the membrane as a helical segment.

It belongs to the MICOS complex subunit Mic12 family. Component of the mitochondrial contact site and cristae organizing system (MICOS) complex.

It localises to the mitochondrion inner membrane. In terms of biological role, component of the MICOS complex, a large protein complex of the mitochondrial inner membrane that plays crucial roles in the maintenance of crista junctions, inner membrane architecture, and formation of contact sites to the outer membrane. The chain is MICOS complex subunit MIC12 (AIM5) from Eremothecium gossypii (strain ATCC 10895 / CBS 109.51 / FGSC 9923 / NRRL Y-1056) (Yeast).